A 181-amino-acid polypeptide reads, in one-letter code: MISKYCLFVIVLGTTGTALVLTNDSNKLQNVKAVIAIQDKVLHFHDHTTDCVGELMCIFAALPESERNQTLSIPLGLLTTIATDKGRDRYSSIYAEAKKLLAGYPTIKHALNAAENGHSTKDKNVCASMYSKCPFEPDDLLDTINDLEDITTLFSKNVFGKVIADAIEYNYTQVGMTQTHS.

A signal peptide spans 1–22 (MISKYCLFVIVLGTTGTALVLT).

Component of the organic matrix of calcified shell layers like nacre and prisms.

Its subcellular location is the secreted. This Mytilus galloprovincialis (Mediterranean mussel) protein is Mytilin-1.